Consider the following 92-residue polypeptide: Small ribosomal subunit protein uS19 (92 aa).

This sequence belongs to the universal ribosomal protein uS19 family.

In terms of biological role, protein S19 forms a complex with S13 that binds strongly to the 16S ribosomal RNA. This is Small ribosomal subunit protein uS19 from Variovorax paradoxus (strain S110).